The primary structure comprises 402 residues: Putative F-box protein At1g70970 (402 aa).

An F-box domain is found at 4-52; that stretch reads SSSETLHVEDLQTEIMSWLPLKSLLRFVIVSKKWASIIRGEQFKALYLR.

This chain is Putative F-box protein At1g70970, found in Arabidopsis thaliana (Mouse-ear cress).